The chain runs to 1200 residues: Nuclear pore complex protein Nup133 (1200 aa).

The disordered stretch occupies residues 1–28 (MERNLQKQLYGISRESSPGARRYSMPAA).

Belongs to the nucleoporin Nup133 family. In terms of assembly, forms part of the Nup107-Nup160 subcomplex in the nuclear pore.

It is found in the nucleus. The protein localises to the nuclear pore complex. In terms of biological role, probable component of the nuclear pore complex (NPC). Plays a role in NPC assembly and/or maintenance. This is Nuclear pore complex protein Nup133 from Drosophila melanogaster (Fruit fly).